Here is a 424-residue protein sequence, read N- to C-terminus: Serine hydroxymethyltransferase 2 (424 aa).

Residues Leu125 and 129–131 (GHL) each bind (6S)-5,6,7,8-tetrahydrofolate. N6-(pyridoxal phosphate)lysine is present on Lys234. A (6S)-5,6,7,8-tetrahydrofolate-binding site is contributed by Glu250.

Belongs to the SHMT family. Homodimer. Pyridoxal 5'-phosphate is required as a cofactor.

Its subcellular location is the cytoplasm. The catalysed reaction is (6R)-5,10-methylene-5,6,7,8-tetrahydrofolate + glycine + H2O = (6S)-5,6,7,8-tetrahydrofolate + L-serine. It participates in one-carbon metabolism; tetrahydrofolate interconversion. The protein operates within amino-acid biosynthesis; glycine biosynthesis; glycine from L-serine: step 1/1. In terms of biological role, catalyzes the reversible interconversion of serine and glycine with tetrahydrofolate (THF) serving as the one-carbon carrier. This reaction serves as the major source of one-carbon groups required for the biosynthesis of purines, thymidylate, methionine, and other important biomolecules. Also exhibits THF-independent aldolase activity toward beta-hydroxyamino acids, producing glycine and aldehydes, via a retro-aldol mechanism. This is Serine hydroxymethyltransferase 2 from Burkholderia pseudomallei (strain 1710b).